Reading from the N-terminus, the 255-residue chain is Indole-3-glycerol phosphate synthase (255 aa).

Belongs to the TrpC family.

The catalysed reaction is 1-(2-carboxyphenylamino)-1-deoxy-D-ribulose 5-phosphate + H(+) = (1S,2R)-1-C-(indol-3-yl)glycerol 3-phosphate + CO2 + H2O. It functions in the pathway amino-acid biosynthesis; L-tryptophan biosynthesis; L-tryptophan from chorismate: step 4/5. This Shouchella clausii (strain KSM-K16) (Alkalihalobacillus clausii) protein is Indole-3-glycerol phosphate synthase.